The chain runs to 66 residues: Kunitz-type serine protease inhibitor Vur-KIn (66 aa).

Gln-1 bears the Pyrrolidone carboxylic acid mark. Residues Cys-7–Cys-57 enclose the BPTI/Kunitz inhibitor domain. 3 cysteine pairs are disulfide-bonded: Cys-7-Cys-57, Cys-16-Cys-40, and Cys-32-Cys-53. A propeptide spanning residues Met-62–Thr-66 is cleaved from the precursor.

Belongs to the venom Kunitz-type family. In terms of tissue distribution, expressed by the venom gland.

It localises to the secreted. Serine protease inhibitor. The sequence is that of Kunitz-type serine protease inhibitor Vur-KIn from Vipera renardi (Steppe viper).